The primary structure comprises 216 residues: Phosphatidylserine decarboxylase proenzyme (216 aa).

S182 acts as the Schiff-base intermediate with substrate; via pyruvic acid in catalysis. Residue S182 is modified to Pyruvic acid (Ser); by autocatalysis.

Belongs to the phosphatidylserine decarboxylase family. PSD-A subfamily. Heterodimer of a large membrane-associated beta subunit and a small pyruvoyl-containing alpha subunit. Pyruvate is required as a cofactor. Is synthesized initially as an inactive proenzyme. Formation of the active enzyme involves a self-maturation process in which the active site pyruvoyl group is generated from an internal serine residue via an autocatalytic post-translational modification. Two non-identical subunits are generated from the proenzyme in this reaction, and the pyruvate is formed at the N-terminus of the alpha chain, which is derived from the carboxyl end of the proenzyme. The post-translation cleavage follows an unusual pathway, termed non-hydrolytic serinolysis, in which the side chain hydroxyl group of the serine supplies its oxygen atom to form the C-terminus of the beta chain, while the remainder of the serine residue undergoes an oxidative deamination to produce ammonia and the pyruvoyl prosthetic group on the alpha chain.

The protein localises to the cell membrane. The catalysed reaction is a 1,2-diacyl-sn-glycero-3-phospho-L-serine + H(+) = a 1,2-diacyl-sn-glycero-3-phosphoethanolamine + CO2. It participates in phospholipid metabolism; phosphatidylethanolamine biosynthesis; phosphatidylethanolamine from CDP-diacylglycerol: step 2/2. Catalyzes the formation of phosphatidylethanolamine (PtdEtn) from phosphatidylserine (PtdSer). In Burkholderia pseudomallei (strain 1106a), this protein is Phosphatidylserine decarboxylase proenzyme.